The chain runs to 473 residues: Inactive FRIGIDA-like protein 2 (473 aa).

2 coiled-coil regions span residues 3 to 35 (AAES…RSLL) and 306 to 361 (SLKV…RATK). The tract at residues 356-384 (RKRATKFNSPANPQQPQEQKVDNKRPRVA) is disordered. A compositionally biased stretch (polar residues) spans 361–373 (KFNSPANPQQPQE).

The protein belongs to the Frigida family. As to expression, expressed at low levels throughout the plant, with slightly higher expression in developing seeds and the highest expression in pollen.

Functionally, inactive FRIGIDA-like 2 protein. This chain is Inactive FRIGIDA-like protein 2 (FRL2), found in Arabidopsis thaliana (Mouse-ear cress).